We begin with the raw amino-acid sequence, 258 residues long: Ferredoxin--NADP reductase (258 aa).

Residues 2–102 enclose the FAD-binding FR-type domain; sequence SNLYTERVLS…RKPTGTLVHD (101 aa). Arg-51, Ala-52, Tyr-53, Ser-54, Phe-67, Ile-69, Leu-76, Thr-77, and Thr-117 together coordinate FAD. 9 residues coordinate NADP(+): Val-144, Arg-145, Thr-181, Arg-182, Arg-190, Ser-223, Glu-227, Phe-255, and Glu-257. Residues Phe-255, Glu-257, and Lys-258 each coordinate FAD.

This sequence belongs to the ferredoxin--NADP reductase type 1 family. Monomer. FAD serves as cofactor.

The enzyme catalyses 2 reduced [2Fe-2S]-[ferredoxin] + NADP(+) + H(+) = 2 oxidized [2Fe-2S]-[ferredoxin] + NADPH. In terms of biological role, transports electrons between ferredoxin and NADPH. Provides electrons to heme oxygenase (pigA) allowing anaerobic heme degradation. Provides electrons necessary to reduce and mobilize Fe(3+) in a heterooligomeric bacterioferritin (BFR) complex to Fe(2+). Reduction of Fe(3+) in a pure FtnA BFR does not require Bfd. Reduction of Fe(3+) in a pure BfrB BFR does require Bfd. The sequence is that of Ferredoxin--NADP reductase from Pseudomonas aeruginosa (strain ATCC 15692 / DSM 22644 / CIP 104116 / JCM 14847 / LMG 12228 / 1C / PRS 101 / PAO1).